The chain runs to 152 residues: CASP-like protein 5C1 (152 aa).

At 1-12 the chain is on the cytoplasmic side; the sequence is MVRTTASFGTSS. Residues 13–33 form a helical membrane-spanning segment; sequence SFVLRLGQTLFSSASLLFMCF. Over 34 to 44 the chain is Extracellular; it reads NDDEDFYAYTT. A helical transmembrane segment spans residues 45–65; the sequence is FCYLVTVMGLVTPWSVTLALM. Residues 66 to 80 lie on the Cytoplasmic side of the membrane; it reads EAYSILVKKLPMQAT. Residues 81–101 traverse the membrane as a helical segment; that stretch reads VISVIVAGDFVLSFLSLGGAC. Residues 102 to 126 lie on the Extracellular side of the membrane; sequence STASVAVLLMDAGEKQCDRYKLSAT. A helical membrane pass occupies residues 127 to 147; sequence MAFLSSFLSFASTFFNFCLLP. Residues 148–152 lie on the Cytoplasmic side of the membrane; the sequence is SLMSH.

The protein belongs to the Casparian strip membrane proteins (CASP) family. As to quaternary structure, homodimer and heterodimers.

It localises to the cell membrane. In Arabidopsis thaliana (Mouse-ear cress), this protein is CASP-like protein 5C1.